The following is a 66-amino-acid chain: DNA-directed RNA polymerase subunit omega (66 aa).

This sequence belongs to the RNA polymerase subunit omega family. As to quaternary structure, the RNAP catalytic core consists of 2 alpha, 1 beta, 1 beta' and 1 omega subunit. When a sigma factor is associated with the core the holoenzyme is formed, which can initiate transcription.

The catalysed reaction is RNA(n) + a ribonucleoside 5'-triphosphate = RNA(n+1) + diphosphate. Its function is as follows. Promotes RNA polymerase assembly. Latches the N- and C-terminal regions of the beta' subunit thereby facilitating its interaction with the beta and alpha subunits. This chain is DNA-directed RNA polymerase subunit omega, found in Geobacillus kaustophilus (strain HTA426).